The chain runs to 360 residues: MKDSIRSKLETLAERQQELTALLAEPEIASAQKKFRELSQEYAQLEPVIGCFRDFEQAQSVLNESKALLQDQDPELRVLAQEEIAAAEKKLERLDRELHTLLLPSDPNDKRNIFLEIRAGTGGDEAALFASDLLRMYLRYAEQRGWRTEIMGDSPGEHGGHKEIIVRIVGAGAYSRLKFESGGHRVQRVPQTESQGRIHTSACTVAIMPEAEEIDDIDINPADLRVDTFRASGAGGQHVNKTDSAIRITHLASGIVVECQDERSQHKNRARAMSLLRTKLKSEEEAKLVAEETATRRSLIGSGDRSERIRTYNFPQGRVTDHRINLTLYKLDEILQGNLDAIIDPLVAEHQADQLAALSD.

Residue Gln-237 is modified to N5-methylglutamine.

This sequence belongs to the prokaryotic/mitochondrial release factor family. In terms of processing, methylated by PrmC. Methylation increases the termination efficiency of RF1.

The protein localises to the cytoplasm. Its function is as follows. Peptide chain release factor 1 directs the termination of translation in response to the peptide chain termination codons UAG and UAA. This chain is Peptide chain release factor 1, found in Nitrosococcus oceani (strain ATCC 19707 / BCRC 17464 / JCM 30415 / NCIMB 11848 / C-107).